The following is a 940-amino-acid chain: PTS system glucose-specific EIICBA component (940 aa).

Residues 1–284 form the PTS EIIC type-1; first part domain; sequence MQIKAQDTGQ…YAPLWYTSAG (284 aa). 5 helical membrane-spanning segments follow: residues 43 to 63, 83 to 103, 112 to 132, 175 to 195, and 209 to 229; these read LMIPIAVLPIAGIFLGVGDAI, GGDVVFANLPILFAIAIAITF, FSAFVFWAAMNGFMSSLILPF, VFGGIIVGALTSVLYKKFYAI, and FVPIICFVVAIPVALILLMIW. The segment at 285–478 is unknown; the sequence is GSLQEIVNQQ…VNSFRVAVES (194 aa). The PTS EIIC type-1; second part domain occupies 479 to 630; the sequence is LNPAQYSQGK…FNLATPGRGG (152 aa). 5 consecutive transmembrane segments (helical) span residues 487–507, 515–535, 537–557, 564–584, and 598–618; these read GKFPFMLFGIPAAGVAMILAA, AASIVGSAAFTSFLTGITEPF, FTFLFLAPWLFYGVHAVLAAV, ILGANVGQTFSGSFIDFILYG, and LVPIIGLFLAAIYFPTFYFLI. The PTS EIIB type-1 domain occupies 661-743; it reads QIEAGILLQA…QDIIQGKVNW (83 aa). Residue Cys-683 is the Phosphocysteine intermediate; for EIIB activity of the active site. The PTS EIIA type-1 domain maps to 794–907; the sequence is DETFKQKLVG…NPITPFVVMK (114 aa). His-847 (tele-phosphohistidine intermediate; for EIIA activity) is an active-site residue.

The protein localises to the cell membrane. It catalyses the reaction N(pros)-phospho-L-histidyl-[protein] + D-glucose(out) = D-glucose 6-phosphate(in) + L-histidyl-[protein]. In terms of biological role, the phosphoenolpyruvate-dependent sugar phosphotransferase system (sugar PTS), a major carbohydrate active transport system, catalyzes the phosphorylation of incoming sugar substrates concomitantly with their translocation across the cell membrane. This system is involved in glucose transport. This is PTS system glucose-specific EIICBA component (ptsG) from Mycoplasma pneumoniae (strain ATCC 29342 / M129 / Subtype 1) (Mycoplasmoides pneumoniae).